The following is a 172-amino-acid chain: 3-hydroxydecanoyl-[acyl-carrier-protein] dehydratase (172 aa).

H71 is an active-site residue.

It belongs to the thioester dehydratase family. FabA subfamily. Homodimer.

The protein localises to the cytoplasm. It carries out the reaction a (3R)-hydroxyacyl-[ACP] = a (2E)-enoyl-[ACP] + H2O. The enzyme catalyses (3R)-hydroxydecanoyl-[ACP] = (2E)-decenoyl-[ACP] + H2O. The catalysed reaction is (2E)-decenoyl-[ACP] = (3Z)-decenoyl-[ACP]. The protein operates within lipid metabolism; fatty acid biosynthesis. Necessary for the introduction of cis unsaturation into fatty acids. Catalyzes the dehydration of (3R)-3-hydroxydecanoyl-ACP to E-(2)-decenoyl-ACP and then its isomerization to Z-(3)-decenoyl-ACP. Can catalyze the dehydratase reaction for beta-hydroxyacyl-ACPs with saturated chain lengths up to 16:0, being most active on intermediate chain length. In Brucella abortus (strain S19), this protein is 3-hydroxydecanoyl-[acyl-carrier-protein] dehydratase.